Reading from the N-terminus, the 160-residue chain is Small ribosomal subunit protein uS7 (160 aa).

The protein belongs to the universal ribosomal protein uS7 family. As to quaternary structure, part of the 30S ribosomal subunit. Contacts proteins S9 and S11.

One of the primary rRNA binding proteins, it binds directly to 16S rRNA where it nucleates assembly of the head domain of the 30S subunit. Is located at the subunit interface close to the decoding center, probably blocks exit of the E-site tRNA. The polypeptide is Small ribosomal subunit protein uS7 (Hydrogenobaculum sp. (strain Y04AAS1)).